Consider the following 279-residue polypeptide: Oxygen-dependent coproporphyrinogen-III oxidase (279 aa).

S102 is a substrate binding site. A divalent metal cation is bound by residues H106 and H116. H116 serves as the catalytic Proton donor. 118-120 (NTR) serves as a coordination point for substrate. The a divalent metal cation site is built by H149 and H179. Residues 244 to 279 (YVEFNLLYDRGTKFGLMTDGNVEAILMSLPPVVKFN) form an important for dimerization region.

It belongs to the aerobic coproporphyrinogen-III oxidase family. As to quaternary structure, homodimer. The cofactor is a divalent metal cation.

It localises to the cytoplasm. It catalyses the reaction coproporphyrinogen III + O2 + 2 H(+) = protoporphyrinogen IX + 2 CO2 + 2 H2O. Its pathway is porphyrin-containing compound metabolism; protoporphyrin-IX biosynthesis; protoporphyrinogen-IX from coproporphyrinogen-III (O2 route): step 1/1. In terms of biological role, involved in the heme biosynthesis. Catalyzes the aerobic oxidative decarboxylation of propionate groups of rings A and B of coproporphyrinogen-III to yield the vinyl groups in protoporphyrinogen-IX. This is Oxygen-dependent coproporphyrinogen-III oxidase from Rickettsia prowazekii (strain Madrid E).